A 373-amino-acid polypeptide reads, in one-letter code: 3-isopropylmalate dehydrogenase gloI (373 aa).

The substrate site is built by S92, R98, and R108. Mg(2+) is bound by residues D228, D253, and D257. Residues H294–I300 and N307 each bind NADP(+).

Belongs to the isocitrate and isopropylmalate dehydrogenases family. In terms of assembly, homodimer. Mg(2+) serves as cofactor. It depends on Mn(2+) as a cofactor.

The enzyme catalyses (2R,3S)-3-isopropylmalate + NAD(+) = 4-methyl-2-oxopentanoate + CO2 + NADH. It participates in mycotoxin biosynthesis. Functionally, 3-isopropylmalate dehydrogenase; part of the gene cluster that mediates the biosynthesis of pneumocandins, lipohexapeptides of the echinocandin family that prevent fungal cell wall formation by non-competitive inhibition of beta-1,3-glucan synthase. The 10,12-dimethylmyristoyl side chain is synthesized by the reducing polyketide synthase gloL/GLPKS4. The thioesterase gloN/GLHYD exclusively interacts with gloL/GLPKS4 to maintain turnover of the polyketide side chain. The 10R,12S-dimethylmyristic acid is then transferred to the first thiolation domain of the nonribosomal peptide synthetase gloA/GLNRPS4 by the acyl-AMP ligase gloD/GLligase, followed by its acylation to L-ornithine to trigger elongation of the cyclic hexapeptide. L-ornithine, 4R-hydroxyl-L-proline (generated from L-proline by the dioxygenase gloF/GLOXY2), 3S-hydroxyl-L-homotyrosine (generated by gloG/GLHtyB, gloH/GLHtyA, gloI/GLHtyC, gloJ/GLHtyD and hydroxylated at C-3 by the dioxygenase gloM/GLOXY1), 3R-hydroxyl-L-glutamine (generated from L-glutamine probably by the dioxygenase gloE/GLOXY3) and 3S-hydroxyl-L-proline (generated from L-proline by the dioxygenase gloF/GLOXY2 to yield pneumocandin B0), or 3S-hydroxyl-4S-methyl-L-proline (generated from L-leucine by the dioxygenase gloC/GLOXY4 to yield pneumocandin A0) are sequentially added to the growing chain. The last C domain of gloA/GLNRPS4 is proposed to be responsible for cyclization by condensation to form the peptide bond between L-ornithine and 3S-hydroxyl-4S-methyl-L-proline (for pneumocandin A0) or 3S-hydroxyl-L-proline (for pneumocandin B0). Finally, the subsequent C-4 hydroxylation of 3S-hydroxyl-L-homotyrosine and L-ornithine dihydroxylation at C-4 and C-5 are performed by the cytochrome P450 monooxygenases gloP/GLP450-1 and gloO/GLP450-2, respectively. The sequence is that of 3-isopropylmalate dehydrogenase gloI from Glarea lozoyensis (strain ATCC 20868 / MF5171).